We begin with the raw amino-acid sequence, 150 residues long: Large ribosomal subunit protein bL9 (150 aa).

It belongs to the bacterial ribosomal protein bL9 family.

Its function is as follows. Binds to the 23S rRNA. The polypeptide is Large ribosomal subunit protein bL9 (Shewanella oneidensis (strain ATCC 700550 / JCM 31522 / CIP 106686 / LMG 19005 / NCIMB 14063 / MR-1)).